Consider the following 1853-residue polypeptide: Cellulosomal-scaffolding protein A (1853 aa).

The signal sequence occupies residues 1 to 28 (MRKVISMLLVVAMLTTIFAAMIPQTVSA). Cohesin domains follow at residues 29 to 182 (ATMT…VPSD) and 183 to 322 (GVVV…VNVG). 2 linker (Pro/Thr-rich) regions span residues 323-363 (NATP…PANT) and 523-559 (GGSVVPSTQPVTTPPATTKPPATTKPPATTIPPSDDP). Positions 323 to 364 (NATPTKGATPTNTATPTKSATATPTRPSVPTNTPTNTPANTP) are enriched in low complexity. Disordered stretches follow at residues 323 to 367 (NATP…PVSG) and 525 to 559 (SVVPSTQPVTTPPATTKPPATTKPPATTIPPSDDP). The region spanning 365–523 (VSGNLKVEFY…GVLVWGKEPG (159 aa)) is the CBM3 domain. Positions 525–555 (SVVPSTQPVTTPPATTKPPATTKPPATTIPP) are enriched in low complexity. 7 Cohesin domains span residues 560 to 704 (NAIK…NVGD), 724 to 866 (AVRI…VNVG), 889 to 1031 (AVRI…VNVG), 1054 to 1196 (AVRI…VNVG), 1219 to 1361 (AVRI…VNVG), 1384 to 1526 (AVRI…VNVG), and 1548 to 1690 (KLTL…VLVT). Residues 1785–1852 (IMMWVGDIVK…FGATSSDYDA (68 aa)) enclose the Dockerin domain.

O-glycosylated on most but not all Thr residues of the linker units. The reducing sugar is galactopyranose.

Its subcellular location is the secreted. In terms of biological role, acts as a scaffolding protein in the cellulosome. It promotes binding of cellulose to the catalytic domains of the cellulolytic enzymes. The chain is Cellulosomal-scaffolding protein A (cipA) from Acetivibrio thermocellus (strain ATCC 27405 / DSM 1237 / JCM 9322 / NBRC 103400 / NCIMB 10682 / NRRL B-4536 / VPI 7372) (Clostridium thermocellum).